The chain runs to 158 residues: 2-C-methyl-D-erythritol 2,4-cyclodiphosphate synthase (158 aa).

2 residues coordinate a divalent metal cation: aspartate 9 and histidine 11. 4-CDP-2-C-methyl-D-erythritol 2-phosphate-binding positions include 9-11 (DVH) and 35-36 (HS). Histidine 43 is a binding site for a divalent metal cation. 4-CDP-2-C-methyl-D-erythritol 2-phosphate is bound by residues 57–59 (DIG), 62–66 (FPDTD), 133–136 (TTTE), phenylalanine 140, and arginine 143.

Belongs to the IspF family. In terms of assembly, homotrimer. A divalent metal cation serves as cofactor.

The catalysed reaction is 4-CDP-2-C-methyl-D-erythritol 2-phosphate = 2-C-methyl-D-erythritol 2,4-cyclic diphosphate + CMP. It functions in the pathway isoprenoid biosynthesis; isopentenyl diphosphate biosynthesis via DXP pathway; isopentenyl diphosphate from 1-deoxy-D-xylulose 5-phosphate: step 4/6. Functionally, involved in the biosynthesis of isopentenyl diphosphate (IPP) and dimethylallyl diphosphate (DMAPP), two major building blocks of isoprenoid compounds. Catalyzes the conversion of 4-diphosphocytidyl-2-C-methyl-D-erythritol 2-phosphate (CDP-ME2P) to 2-C-methyl-D-erythritol 2,4-cyclodiphosphate (ME-CPP) with a corresponding release of cytidine 5-monophosphate (CMP). This chain is 2-C-methyl-D-erythritol 2,4-cyclodiphosphate synthase, found in Actinobacillus succinogenes (strain ATCC 55618 / DSM 22257 / CCUG 43843 / 130Z).